Reading from the N-terminus, the 411-residue chain is Carbohydrate sulfotransferase 1 (411 aa).

Residues 1 to 2 are Cytoplasmic-facing; that stretch reads MQ. Residues 3-23 traverse the membrane as a helical; Signal-anchor for type II membrane protein segment; the sequence is CSWKAVLLLALASIAIQYTAI. The Lumenal portion of the chain corresponds to 24–411; it reads RTFTAKSFHT…VEERDFRPFL (388 aa). N56 is a glycosylation site (N-linked (GlcNAc...) asparagine). A 3'-phosphoadenylyl sulfate-binding site is contributed by 69 to 75; sequence TRSGSSF. N145 and N189 each carry an N-linked (GlcNAc...) asparagine glycan. 234 to 242 contributes to the 3'-phosphoadenylyl sulfate binding site; that stretch reads RDPRGILAS. N334 carries N-linked (GlcNAc...) asparagine glycosylation. A Cell attachment site motif is present at residues 337–339; sequence RGD.

Belongs to the sulfotransferase 1 family. Gal/GlcNAc/GalNAc subfamily. Broadly expressed with highest levels in central nervous system. Expressed in cortex (at protein level). Expressed in high endothelial venules in peripheral lymph nodes, mesenteric lymph nodes and Peyer's patches.

It is found in the golgi apparatus membrane. The enzyme catalyses 3'-phosphoadenylyl sulfate + keratan = adenosine 3',5'-bisphosphate + keratan 6'-sulfate.. The protein operates within glycan metabolism. Sulfotransferase that utilizes 3'-phospho-5'-adenylyl sulfate (PAPS) as sulfonate donor to catalyze the transfer of sulfate to position 6 of internal galactose (Gal) residues of keratan. Cooperates with B4GALT4 and B3GNT7 glycosyltransferases and CHST6 sulfotransferase to construct and elongate disulfated disaccharide unit [-&gt;3(6-sulfoGalbeta)1-&gt;4(6-sulfoGlcNAcbeta)1-&gt;] within keratan sulfate polymer. Has a preference for sulfating keratan sulfate, but it also transfers sulfate to the unsulfated polymer. Involved in biosynthesis of phosphacan, a major keratan sulfate proteoglycan in the developing brain. Involved in biosynthesis of 6-sulfoGalbeta-containing O-linked glycans in high endothelial venules of lymph nodes. May act in a synergistic manner with CHST4 to generate sialyl 6',6-disulfo Lewis X motif, a recognition determinant for immune cell receptors implicated in leukocyte trafficking. Catalyzes sulfation of N-acetyllactosamine (LacNAc) oligosaccharides with highest efficiency for sialylated LacNAc structures. The polypeptide is Carbohydrate sulfotransferase 1 (Chst1) (Mus musculus (Mouse)).